Reading from the N-terminus, the 187-residue chain is Putative manganese efflux pump MntP (187 aa).

6 helical membrane-spanning segments follow: residues 3–23 (MSAT…ASIG), 41–61 (LIFG…GFFA), 62–82 (SQYI…ILGG), 107–129 (LLVC…LAFL), 143–163 (ATMI…PILG), and 166–186 (AEII…YEHL).

The protein belongs to the MntP (TC 9.B.29) family.

Its subcellular location is the cell inner membrane. Functionally, probably functions as a manganese efflux pump. The sequence is that of Putative manganese efflux pump MntP from Pectobacterium atrosepticum (strain SCRI 1043 / ATCC BAA-672) (Erwinia carotovora subsp. atroseptica).